Reading from the N-terminus, the 493-residue chain is Cysteine sulfinic acid decarboxylase (493 aa).

N6-(pyridoxal phosphate)lysine is present on K305.

Belongs to the group II decarboxylase family. As to quaternary structure, homodimer. The cofactor is pyridoxal 5'-phosphate. As to expression, expressed in liver and brain. Also expressed in both astrocytes and neurons, but lower levels are expressed in astrocytes.

The catalysed reaction is L-aspartate + H(+) = beta-alanine + CO2. The enzyme catalyses 3-sulfino-L-alanine + H(+) = hypotaurine + CO2. It catalyses the reaction L-cysteate + H(+) = taurine + CO2. It functions in the pathway organosulfur biosynthesis; taurine biosynthesis; hypotaurine from L-cysteine: step 2/2. In terms of biological role, catalyzes the decarboxylation of L-aspartate, 3-sulfino-L-alanine (cysteine sulfinic acid), and L-cysteate to beta-alanine, hypotaurine and taurine, respectively. The preferred substrate is 3-sulfino-L-alanine. Does not exhibit any decarboxylation activity toward glutamate. The chain is Cysteine sulfinic acid decarboxylase (CSAD) from Homo sapiens (Human).